The chain runs to 581 residues: NADP-dependent malic enzyme 1 (581 aa).

Y129 (proton donor) is an active-site residue. Position 182 (R182) interacts with NADP(+). K200 (proton acceptor) is an active-site residue. The a divalent metal cation site is built by E272, D273, and D296. Residues D296, 325–341 (LFLGAGEAGTGIAELIA), and N437 each bind NADP(+).

Belongs to the malic enzymes family. In terms of assembly, homohexamers and homooctamers. The cofactor is Mg(2+). Requires Mn(2+) as cofactor. In terms of tissue distribution, specifically expressed in roots (only in steles of secondary roots).

It is found in the cytoplasm. It carries out the reaction (S)-malate + NADP(+) = pyruvate + CO2 + NADPH. It catalyses the reaction oxaloacetate + H(+) = pyruvate + CO2. The sequence is that of NADP-dependent malic enzyme 1 (NADP-ME1) from Arabidopsis thaliana (Mouse-ear cress).